Reading from the N-terminus, the 323-residue chain is Lipoyl synthase (323 aa).

[4Fe-4S] cluster-binding residues include Cys-69, Cys-74, Cys-80, Cys-95, Cys-99, Cys-102, and Ser-310. A Radical SAM core domain is found at 81 to 299 (WTHGTLTVMI…EAWGYELGFR (219 aa)).

It belongs to the radical SAM superfamily. Lipoyl synthase family. The cofactor is [4Fe-4S] cluster.

It localises to the cytoplasm. The catalysed reaction is [[Fe-S] cluster scaffold protein carrying a second [4Fe-4S](2+) cluster] + N(6)-octanoyl-L-lysyl-[protein] + 2 oxidized [2Fe-2S]-[ferredoxin] + 2 S-adenosyl-L-methionine + 4 H(+) = [[Fe-S] cluster scaffold protein] + N(6)-[(R)-dihydrolipoyl]-L-lysyl-[protein] + 4 Fe(3+) + 2 hydrogen sulfide + 2 5'-deoxyadenosine + 2 L-methionine + 2 reduced [2Fe-2S]-[ferredoxin]. It functions in the pathway protein modification; protein lipoylation via endogenous pathway; protein N(6)-(lipoyl)lysine from octanoyl-[acyl-carrier-protein]: step 2/2. Catalyzes the radical-mediated insertion of two sulfur atoms into the C-6 and C-8 positions of the octanoyl moiety bound to the lipoyl domains of lipoate-dependent enzymes, thereby converting the octanoylated domains into lipoylated derivatives. In Thermus thermophilus (strain ATCC 27634 / DSM 579 / HB8), this protein is Lipoyl synthase.